We begin with the raw amino-acid sequence, 1462 residues long: Copper-transporting ATPase 2 (1462 aa).

Positions 1–23 (MDPRKNLASVGTMPEQERQVTAK) are disordered. Residues 1–655 (MDPRKNLASV…KTEIKQWKKS (655 aa)) are Cytoplasmic-facing. HMA domains are found at residues 68-134 (ATDV…FEAS), 153-219 (AVVK…FEAA), 267-333 (ATLP…PGHF), and 361-427 (RTAV…FEVS). Cu(+) contacts are provided by Cys-79, Cys-82, Cys-164, Cys-167, Cys-278, and Cys-281. A disordered region spans residues 333 to 361 (FKVSLPDGVEENEPQSGSSQRHQEQGPGR). Residue Cys-372 coordinates Cu(+). The segment at 460–487 (KMAPDTRGLPTHQGPGHSSETPSSPGAT) is disordered. Polar residues predominate over residues 475–487 (GHSSETPSSPGAT). A phosphoserine mark is found at Ser-478 and Ser-483. 2 consecutive HMA domains span residues 490 to 556 (QKCF…FEAS) and 566 to 632 (GDIE…FHAS). Cu(+) is bound by residues Cys-501, Cys-504, Cys-577, and Cys-580. The helical transmembrane segment at 656–677 (FLCSLVFGIPVMGLMVYMLIPS) threads the bilayer. Residues 678–699 (STPQETMVLDHNIIPGLSVLNL) lie on the Extracellular side of the membrane. The chain crosses the membrane as a helical span at residues 700–719 (IFFILCTFVQFLGGWYFYVQ). The Cytoplasmic segment spans residues 720 to 726 (AYKSLRH). A helical transmembrane segment spans residues 727–747 (RSANMDVLIVLATTIAYAYSL). The Extracellular portion of the chain corresponds to 748-766 (VILVVAVAEKAEKSPVTFF). The helical transmembrane segment at 767 to 787 (DTPPMLFVFIALGRWLEHVAK) threads the bilayer. Over 788–921 (SKTSEALAKL…KAPIQQLADR (134 aa)) the chain is Cytoplasmic. A helical membrane pass occupies residues 922–944 (FSGYFVPFIIIISTLTLVVWIVI). The Extracellular portion of the chain corresponds to 945–974 (GFVDFGVVQKYFPSPSKHISQTEVIIRFAF). Residues 975–996 (QTSITVLCIACPCSLGLATPTA) form a helical membrane-spanning segment. The Cytoplasmic portion of the chain corresponds to 997 to 1319 (VMVGTGVAAQ…LSKRTVRRIR (323 aa)). The 4-aspartylphosphate intermediate role is filled by Asp-1029. Residues Asp-1264 and Asp-1268 each coordinate Mg(2+). A helical transmembrane segment spans residues 1320 to 1337 (VNLVLALIYNMVGIPIAA). The Extracellular portion of the chain corresponds to 1338–1348 (GVFMPIGIVLQ). The helical transmembrane segment at 1349–1368 (PWMGSAAMAASSVSVVLSSL) threads the bilayer. Topologically, residues 1369–1462 (QLKCYRKPDL…LSDRDEEQCI (94 aa)) are cytoplasmic. Phosphoserine is present on residues Ser-1395 and Ser-1454.

It belongs to the cation transport ATPase (P-type) (TC 3.A.3) family. Type IB subfamily. Monomer. Interacts with COMMD1/MURR1. Interacts with DCTN4, in a copper-dependent manner. Interacts with ATOX1. Interacts (via C-terminus) with ZBTB16/PLZF. Detected in liver and kidney.

It localises to the golgi apparatus. The protein localises to the trans-Golgi network membrane. Its subcellular location is the late endosome. It catalyses the reaction Cu(+)(in) + ATP + H2O = Cu(+)(out) + ADP + phosphate + H(+). Functionally, copper ion transmembrane transporter involved in the export of copper out of the cells, such as the efflux of hepatic copper into the bile. This is Copper-transporting ATPase 2 (Atp7b) from Mus musculus (Mouse).